The chain runs to 208 residues: Histone H1t (208 aa).

Residues 1–12 (MSETAPAASSTL) show a composition bias toward polar residues. A disordered region spans residues 1–39 (MSETAPAASSTLVPAPVEKPATKRRGKKPGMATARKPRG). Ser9 carries the post-translational modification Phosphoserine. The H15 domain occupies 38–111 (RGFSVSKLIP…GASGSFKLSK (74 aa)). Position 56 is a citrulline (Arg56). The interval 93–208 (GVLVQTKGTG…TDLRKAAGRK (116 aa)) is disordered. Residues 121–134 (KGKKSASAKAKKLG) are compositionally biased toward basic residues. Ser141 bears the Phosphoserine mark. Basic residues predominate over residues 143 to 154 (KSSKTKVVKKPK). A Phosphothreonine modification is found at Thr156. Residues Ser163, Ser178, and Ser187 each carry the phosphoserine modification. Residues 199–208 (TDLRKAAGRK) are compositionally biased toward basic and acidic residues.

This sequence belongs to the histone H1/H5 family. Post-translationally, phosphorylated in early spermatids. In terms of processing, citrullination at Arg-56 (H1R54ci) by PADI4 takes place within the DNA-binding site of H1 and results in its displacement from chromatin and global chromatin decondensation, thereby promoting pluripotency and stem cell maintenance. As to expression, testis-specific. Expressed in pachytene spermatocytes during meiotic prophase I.

It localises to the nucleus. The protein localises to the chromosome. Functionally, testis-specific histone H1 that forms less compacted chromatin compared to other H1 histone subtypes. Formation of more relaxed chromatin may be required to promote chromatin architecture required for proper chromosome regulation during meiosis, such as homologous recombination. Histones H1 act as linkers that bind to nucleosomes and compact polynucleosomes into a higher-order chromatin configuration. In Rattus norvegicus (Rat), this protein is Histone H1t.